A 203-amino-acid polypeptide reads, in one-letter code: Glycerol-3-phosphate acyltransferase (203 aa).

Helical transmembrane passes span 10–30 (LLAL…GLLI), 59–79 (PAAA…VILA), 87–107 (AAQI…YLKF), 116–136 (FFGT…AIWL), and 168–188 (LVVL…ENII).

It belongs to the PlsY family. As to quaternary structure, probably interacts with PlsX.

Its subcellular location is the cell inner membrane. It catalyses the reaction an acyl phosphate + sn-glycerol 3-phosphate = a 1-acyl-sn-glycero-3-phosphate + phosphate. It functions in the pathway lipid metabolism; phospholipid metabolism. Catalyzes the transfer of an acyl group from acyl-phosphate (acyl-PO(4)) to glycerol-3-phosphate (G3P) to form lysophosphatidic acid (LPA). This enzyme utilizes acyl-phosphate as fatty acyl donor, but not acyl-CoA or acyl-ACP. This Dinoroseobacter shibae (strain DSM 16493 / NCIMB 14021 / DFL 12) protein is Glycerol-3-phosphate acyltransferase.